A 120-amino-acid chain; its full sequence is Protein crumbs homolog 3 (120 aa).

The first 26 residues, 1–26 (MANPGLGLLLALGLPFLLARWGRAWG), serve as a signal peptide directing secretion. The Extracellular segment spans residues 27–59 (QIQTTSANENSTVLPSSTSSSSDGNLRPEAITA). N-linked (GlcNAc...) asparagine glycosylation occurs at Asn-36. Residues 60–80 (IIVVFSLLAALLLAVGLALLV) traverse the membrane as a helical segment. The Cytoplasmic segment spans residues 81-120 (RKLREKRQTEGTYRPSSEEQVGARVPPTPNLKLPPEERLI). The interval 84–120 (REKRQTEGTYRPSSEEQVGARVPPTPNLKLPPEERLI) is interaction with EPB41L5. A disordered region spans residues 87–120 (RQTEGTYRPSSEEQVGARVPPTPNLKLPPEERLI). Over residues 90–99 (EGTYRPSSEE) the composition is skewed to polar residues. Residues 117-120 (ERLI) carry the PDZ-binding motif.

As to quaternary structure, component of a complex composed of CRB3, PALS1 and PATJ. Interacts (via C-terminus) with PALS1 (via PDZ domain). Interacts with PARD6A. Interacts (via intracellular domain) with EPB41L5. Interacts with WDR83. Preferentially expressed in epithelial tissues. Expressed at high levels in lung, kidney, and colon. Expressed at high levels in retina, colon and mammary glands. Moderately expressed in liver, spleen, pancreas and prostate. Moderately to weakly expressed in the placenta. Weakly expressed in skeletal muscle and small intestine.

The protein resides in the apical cell membrane. It localises to the cell junction. It is found in the tight junction. Functionally, involved in the establishment of cell polarity in mammalian epithelial cells. Regulates the morphogenesis of tight junctions. Involved in promoting phosphorylation and cytoplasmic retention of transcriptional coactivators YAP1 and WWTR1/TAZ which leads to suppression of TGFB1-dependent transcription of target genes such as CCN2/CTGF, SERPINE1/PAI1, SNAI1/SNAIL1 and SMAD7. In Homo sapiens (Human), this protein is Protein crumbs homolog 3.